A 131-amino-acid chain; its full sequence is Sec-independent protein translocase protein TatB (131 aa).

A helical transmembrane segment spans residues 2–22 (LGSLSWEHMLVLVVVGLVVLG). Residues 96–131 (AFDRPVNGAAAQPPPAPAPPPEPHRPGQTPFDADAT) are disordered. The segment covering 107-116 (QPPPAPAPPP) has biased composition (pro residues).

Belongs to the TatB family. In terms of assembly, the Tat system comprises two distinct complexes: a TatABC complex, containing multiple copies of TatA, TatB and TatC subunits, and a separate TatA complex, containing only TatA subunits. Substrates initially bind to the TatABC complex, which probably triggers association of the separate TatA complex to form the active translocon.

Its subcellular location is the cell membrane. Its function is as follows. Part of the twin-arginine translocation (Tat) system that transports large folded proteins containing a characteristic twin-arginine motif in their signal peptide across membranes. Together with TatC, TatB is part of a receptor directly interacting with Tat signal peptides. TatB may form an oligomeric binding site that transiently accommodates folded Tat precursor proteins before their translocation. The chain is Sec-independent protein translocase protein TatB from Mycobacterium avium (strain 104).